A 298-amino-acid chain; its full sequence is N-acetylmuramic acid 6-phosphate etherase 2 (298 aa).

The SIS domain occupies 51–214 (IVSRFEQGGR…STAAMVRLGR (164 aa)). Glutamate 79 acts as the Proton donor in catalysis. Residue glutamate 110 is part of the active site.

The protein belongs to the GCKR-like family. MurNAc-6-P etherase subfamily. As to quaternary structure, homodimer.

The catalysed reaction is N-acetyl-D-muramate 6-phosphate + H2O = N-acetyl-D-glucosamine 6-phosphate + (R)-lactate. It functions in the pathway amino-sugar metabolism; N-acetylmuramate degradation. Functionally, specifically catalyzes the cleavage of the D-lactyl ether substituent of MurNAc 6-phosphate, producing GlcNAc 6-phosphate and D-lactate. The chain is N-acetylmuramic acid 6-phosphate etherase 2 from Bacillus licheniformis (strain ATCC 14580 / DSM 13 / JCM 2505 / CCUG 7422 / NBRC 12200 / NCIMB 9375 / NCTC 10341 / NRRL NRS-1264 / Gibson 46).